Here is a 463-residue protein sequence, read N- to C-terminus: Cysteine--tRNA ligase (463 aa).

Cysteine 29 provides a ligand contact to Zn(2+). Positions 31 to 41 (PTVYDFAHIGN) match the 'HIGH' region motif. 3 residues coordinate Zn(2+): cysteine 227, histidine 252, and glutamate 256. A 'KMSKS' region motif is present at residues 285 to 289 (KMSKS). Lysine 288 contributes to the ATP binding site.

The protein belongs to the class-I aminoacyl-tRNA synthetase family. As to quaternary structure, monomer. Zn(2+) serves as cofactor.

The protein resides in the cytoplasm. The enzyme catalyses tRNA(Cys) + L-cysteine + ATP = L-cysteinyl-tRNA(Cys) + AMP + diphosphate. The polypeptide is Cysteine--tRNA ligase (Rhodopseudomonas palustris (strain ATCC BAA-98 / CGA009)).